The primary structure comprises 351 residues: Heat-inducible transcription repressor HrcA (351 aa).

This sequence belongs to the HrcA family.

In terms of biological role, negative regulator of class I heat shock genes (grpE-dnaK-dnaJ and groELS operons). Prevents heat-shock induction of these operons. The chain is Heat-inducible transcription repressor HrcA from Beutenbergia cavernae (strain ATCC BAA-8 / DSM 12333 / CCUG 43141 / JCM 11478 / NBRC 16432 / NCIMB 13614 / HKI 0122).